The primary structure comprises 706 residues: Envelope glycoprotein H (706 aa).

Positions methionine 1–alanine 18 are cleaved as a signal peptide. Over serine 19–leucine 682 the chain is Virion surface. Asparagine 60 carries N-linked (GlcNAc...) asparagine; by host glycosylation. Disulfide bonds link cysteine 120-cysteine 312 and cysteine 278-cysteine 335. The tract at residues aspartate 165–valine 229 is interaction with gL. The N-linked (GlcNAc...) asparagine; by host glycan is linked to asparagine 435. 2 cysteine pairs are disulfide-bonded: cysteine 454–cysteine 478 and cysteine 534–cysteine 587. 2 N-linked (GlcNAc...) asparagine; by host glycosylation sites follow: asparagine 549 and asparagine 604. Residues cysteine 612 and cysteine 615 are joined by a disulfide bond. A glycan (N-linked (GlcNAc...) asparagine; by host) is linked at asparagine 664. A helical transmembrane segment spans residues alanine 683–methionine 703. Residues phenylalanine 704 to leucine 706 lie on the Intravirion side of the membrane.

This sequence belongs to the herpesviridae glycoprotein H family. Interacts with glycoprotein L (gL); this interaction is necessary for the correct processing and cell surface expression of gH. The heterodimer gH/gL seems to interact with gB trimers during fusion. The heterodimer gH/gL interacts with host EPHA2 to facilitate virus internalization and fusion. Interacts with glycoprotein 42/BZLF2. N-glycosylated, O-glycosylated, and sialylated.

It is found in the virion membrane. It localises to the host cell membrane. The protein resides in the host endosome membrane. In terms of biological role, the heterodimer glycoprotein H-glycoprotein L is required for the fusion of viral and plasma membranes leading to virus entry into the host cell. Following initial binding to host receptor, membrane fusion is mediated by the fusion machinery composed of gB and the heterodimer gH/gL. May also be involved in the fusion between the virion envelope and the outer nuclear membrane during virion morphogenesis. The heterodimer gH/gL targets also host EPHA2 to promote viral entry. This chain is Envelope glycoprotein H, found in Homo sapiens (Human).